The chain runs to 907 residues: Phosphoenolpyruvate carboxylase (907 aa).

Residues H138 and K570 contribute to the active site.

This sequence belongs to the PEPCase type 1 family. It depends on Mg(2+) as a cofactor.

It catalyses the reaction oxaloacetate + phosphate = phosphoenolpyruvate + hydrogencarbonate. Functionally, forms oxaloacetate, a four-carbon dicarboxylic acid source for the tricarboxylic acid cycle. This Streptococcus mutans serotype c (strain ATCC 700610 / UA159) protein is Phosphoenolpyruvate carboxylase.